The following is a 428-amino-acid chain: ATP-dependent RNA helicase RhlB (428 aa).

The Q motif signature appears at 9–37 (QKFSDFALHPLVLEALEKKGFQHCTPIQA). In terms of domain architecture, Helicase ATP-binding spans 40–219 (LPLTLSGRDV…FEQMNNAEYV (180 aa)). 53-60 (AQTGTGKT) is an ATP binding site. The DEAD box motif lies at 165-168 (DEAD). Residues 245-390 (RLLQTLIEEE…VSKYNSDALL (146 aa)) form the Helicase C-terminal domain. The interval 392-428 (DLPAPKRLARPRGGNGPRRNSAPRRGGAPRNNRKRSG) is disordered. Over residues 408–421 (PRRNSAPRRGGAPR) the composition is skewed to low complexity.

The protein belongs to the DEAD box helicase family. RhlB subfamily. Component of the RNA degradosome, which is a multiprotein complex involved in RNA processing and mRNA degradation.

The protein resides in the cytoplasm. The catalysed reaction is ATP + H2O = ADP + phosphate + H(+). Functionally, DEAD-box RNA helicase involved in RNA degradation. Has RNA-dependent ATPase activity and unwinds double-stranded RNA. In Serratia proteamaculans (strain 568), this protein is ATP-dependent RNA helicase RhlB.